A 103-amino-acid chain; its full sequence is MATYAIVKTGGKQYKVAAGDVVKVEKLDSEPGASVSLPVALVVDGANVTSKADDLAKVAVTAEVLEHTKGPKIRIHKFKNKTGYHKRQGHRQQLTVLKVTGIK.

It belongs to the bacterial ribosomal protein bL21 family. In terms of assembly, part of the 50S ribosomal subunit. Contacts protein L20.

In terms of biological role, this protein binds to 23S rRNA in the presence of protein L20. This chain is Large ribosomal subunit protein bL21, found in Mycolicibacterium smegmatis (strain ATCC 700084 / mc(2)155) (Mycobacterium smegmatis).